The following is a 130-amino-acid chain: Small ribosomal subunit protein uS9 (130 aa).

It belongs to the universal ribosomal protein uS9 family.

The sequence is that of Small ribosomal subunit protein uS9 from Hamiltonella defensa subsp. Acyrthosiphon pisum (strain 5AT).